The chain runs to 750 residues: Photosystem I P700 chlorophyll a apoprotein A1 (750 aa).

The next 8 helical transmembrane spans lie at 70–93, 156–179, 195–219, 291–309, 346–369, 385–411, 433–455, and 531–549; these read VFSA…FHGA, LYCT…FHYH, LNHH…HVSL, IAHH…GHMY, WHAQ…HHMY, LSLF…IFMV, AIIS…LYIH, and FLVH…LILL. Positions 573 and 582 each coordinate [4Fe-4S] cluster. Helical transmembrane passes span 589–610 and 664–686; these read HVFL…HFSW and LSAY…MFLF. Histidine 675 lines the chlorophyll a' pocket. Chlorophyll a contacts are provided by methionine 683 and tyrosine 691. Position 692 (tryptophan 692) interacts with phylloquinone. The chain crosses the membrane as a helical span at residues 724-744; that stretch reads AVGVTHYLLGGIATTWAFFLA.

The protein belongs to the PsaA/PsaB family. As to quaternary structure, the PsaA/B heterodimer binds the P700 chlorophyll special pair and subsequent electron acceptors. PSI consists of a core antenna complex that captures photons, and an electron transfer chain that converts photonic excitation into a charge separation. The eukaryotic PSI reaction center is composed of at least 11 subunits. The cofactor is P700 is a chlorophyll a/chlorophyll a' dimer, A0 is one or more chlorophyll a, A1 is one or both phylloquinones and FX is a shared 4Fe-4S iron-sulfur center..

It localises to the plastid. Its subcellular location is the chloroplast thylakoid membrane. The enzyme catalyses reduced [plastocyanin] + hnu + oxidized [2Fe-2S]-[ferredoxin] = oxidized [plastocyanin] + reduced [2Fe-2S]-[ferredoxin]. Its function is as follows. PsaA and PsaB bind P700, the primary electron donor of photosystem I (PSI), as well as the electron acceptors A0, A1 and FX. PSI is a plastocyanin-ferredoxin oxidoreductase, converting photonic excitation into a charge separation, which transfers an electron from the donor P700 chlorophyll pair to the spectroscopically characterized acceptors A0, A1, FX, FA and FB in turn. Oxidized P700 is reduced on the lumenal side of the thylakoid membrane by plastocyanin. In Atropa belladonna (Belladonna), this protein is Photosystem I P700 chlorophyll a apoprotein A1.